Here is a 491-residue protein sequence, read N- to C-terminus: Probable cysteine proteinase 024R (491 aa).

Active-site residues include Cys-132, His-325, and Asn-355. Residues 467–487 (ALDLALLVLPALLIVIVVLIG) traverse the membrane as a helical segment.

It belongs to the peptidase C1 family.

It localises to the membrane. Probable cysteine protease. The sequence is that of Probable cysteine proteinase 024R from Invertebrate iridescent virus 3 (IIV-3).